The following is a 393-amino-acid chain: Sulfite oxidase (393 aa).

The segment at 1 to 27 is disordered; the sequence is MPGIRGPSEYSQEPPRHPSLKVNAKEP. Residues 10–242 form a moco domain region; it reads YSQEPPRHPS…QGFFMQKDYK (233 aa). Residues 49 to 53, cysteine 98, 159 to 161, histidine 202, arginine 207, and 218 to 220 each bind Mo-molybdopterin; these read YKRNH, SVD, and SVK. The tract at residues 243 to 393 is homodimerization; it reads MFPPSVNWDN…VLLRLGHSNL (151 aa). The short motif at 391-393 is the Microbody targeting signal element; the sequence is SNL.

Predominantly monomer; also homodimer. Requires Mo-molybdopterin as cofactor.

The protein resides in the peroxisome. The catalysed reaction is sulfite + O2 + H2O = sulfate + H2O2. It functions in the pathway energy metabolism; sulfur metabolism. In terms of biological role, probably involved in sulfite oxidative detoxification. The sequence is that of Sulfite oxidase (SOX) from Arabidopsis thaliana (Mouse-ear cress).